The following is an 87-amino-acid chain: Large ribosomal subunit protein bL27c (87 aa).

The disordered stretch occupies residues 1 to 20; it reads MAHKKGSGSTKNGRDSRSQR.

This sequence belongs to the bacterial ribosomal protein bL27 family.

The protein resides in the plastid. It localises to the chloroplast. The polypeptide is Large ribosomal subunit protein bL27c (Gracilaria tenuistipitata var. liui (Red alga)).